Reading from the N-terminus, the 267-residue chain is MNTWLNLKDNVIIVTGGASGIGLAIVDELLSQGAHVQMIDIHGGDRHHNGDNYHFWSTDISSATEVQQTIDAIIQRWSRIDGLVNNAGVNFPRLLVDEKAPAGRYELNEAAFEKMVNINQKGVFFMSQAVARQMVKQRAGVIVNVSSESGLEGSEGQSCYAATKAALNSFTRSWSKELGKYGIRVVGVAPGILEKTGLRTPEYEEALAWTRNITVEQLREGYTKNAIPIGRAGKLSEVADFVCYLLSARASYITGVTTNIAGGKTRG.

Position 9-38 (Asp-9–Met-38) interacts with NAD(+). Substrate is bound at residue Ser-147. Tyr-160 acts as the Proton acceptor in catalysis.

It belongs to the short-chain dehydrogenases/reductases (SDR) family. As to quaternary structure, homotetramer.

The enzyme catalyses D-sorbitol 6-phosphate + NAD(+) = beta-D-fructose 6-phosphate + NADH + H(+). It participates in carbohydrate metabolism; D-sorbitol degradation; D-fructose 6-phosphate from D-sorbitol 6-phosphate: step 1/1. The polypeptide is Sorbitol-6-phosphate 2-dehydrogenase (sorD) (Klebsiella pneumoniae).